Here is a 96-residue protein sequence, read N- to C-terminus: Co-chaperonin GroES 2 (96 aa).

It belongs to the GroES chaperonin family. Heptamer of 7 subunits arranged in a ring. Interacts with the chaperonin GroEL.

It localises to the cytoplasm. In terms of biological role, together with the chaperonin GroEL, plays an essential role in assisting protein folding. The GroEL-GroES system forms a nano-cage that allows encapsulation of the non-native substrate proteins and provides a physical environment optimized to promote and accelerate protein folding. GroES binds to the apical surface of the GroEL ring, thereby capping the opening of the GroEL channel. The chain is Co-chaperonin GroES 2 from Vibrio parahaemolyticus serotype O3:K6 (strain RIMD 2210633).